A 116-amino-acid chain; its full sequence is T cell receptor alpha variable 38-2/delta variable 8 (116 aa).

An N-terminal signal peptide occupies residues 1 to 21 (MACPGFLWALVISTCLEFSMA). The region spanning 22-116 (QTVTQSQPEM…AAMYFCAYRS (95 aa)) is the Ig-like domain. Cys-43 and Cys-112 are disulfide-bonded. The N-linked (GlcNAc...) asparagine glycan is linked to Asn-78.

As to quaternary structure, alpha-beta TR is a heterodimer composed of an alpha and beta chain; disulfide-linked. The alpha-beta TR is associated with the transmembrane signaling CD3 coreceptor proteins to form the TR-CD3 (TcR or TCR). The assembly of alpha-beta TR heterodimers with CD3 occurs in the endoplasmic reticulum where a single alpha-beta TR heterodimer associates with one CD3D-CD3E heterodimer, one CD3G-CD3E heterodimer and one CD247 homodimer forming a stable octameric structure. CD3D-CD3E and CD3G-CD3E heterodimers preferentially associate with TR alpha and TR beta chains, respectively. The association of the CD247 homodimer is the last step of TcR assembly in the endoplasmic reticulum and is required for transport to the cell surface.

The protein localises to the cell membrane. V region of the variable domain of T cell receptor (TR) alpha chain that participates in the antigen recognition. Alpha-beta T cell receptors are antigen specific receptors which are essential to the immune response and are present on the cell surface of T lymphocytes. Recognize peptide-major histocompatibility (MH) (pMH) complexes that are displayed by antigen presenting cells (APC), a prerequisite for efficient T cell adaptive immunity against pathogens. Binding of alpha-beta TR to pMH complex initiates TR-CD3 clustering on the cell surface and intracellular activation of LCK that phosphorylates the ITAM motifs of CD3G, CD3D, CD3E and CD247 enabling the recruitment of ZAP70. In turn ZAP70 phosphorylates LAT, which recruits numerous signaling molecules to form the LAT signalosome. The LAT signalosome propagates signal branching to three major signaling pathways, the calcium, the mitogen-activated protein kinase (MAPK) kinase and the nuclear factor NF-kappa-B (NF-kB) pathways, leading to the mobilization of transcription factors that are critical for gene expression and essential for T cell growth and differentiation. The T cell repertoire is generated in the thymus, by V-(D)-J rearrangement. This repertoire is then shaped by intrathymic selection events to generate a peripheral T cell pool of self-MH restricted, non-autoaggressive T cells. Post-thymic interaction of alpha-beta TR with the pMH complexes shapes TR structural and functional avidity. The sequence is that of T cell receptor alpha variable 38-2/delta variable 8 from Homo sapiens (Human).